The following is a 549-amino-acid chain: Teichoic acids export ATP-binding protein TagH (549 aa).

In terms of domain architecture, ABC transporter spans D22–Q243. G57–S64 provides a ligand contact to ATP. The tract at residues M244 to K549 is unknown. The SH3b domain occupies E346–K415.

This sequence belongs to the ABC transporter superfamily. Teichoic acids exporter (TC 3.A.1.104.1) family. In terms of assembly, the complex is composed of two ATP-binding proteins (TagH) and two transmembrane proteins (TagG).

Its subcellular location is the cell membrane. It catalyses the reaction ATP + H2O + teichoic acidSide 1 = ADP + phosphate + teichoic acidSide 2.. Functionally, part of the ABC transporter complex TagGH involved in teichoic acids export. Responsible for energy coupling to the transport system. This Bacillus cereus (strain ZK / E33L) protein is Teichoic acids export ATP-binding protein TagH.